Here is a 333-residue protein sequence, read N- to C-terminus: Ribosomal protein L11 methyltransferase (333 aa).

S-adenosyl-L-methionine-binding residues include Thr-181, Gly-202, Asp-224, and Asn-268.

This sequence belongs to the methyltransferase superfamily. PrmA family.

It is found in the cytoplasm. It carries out the reaction L-lysyl-[protein] + 3 S-adenosyl-L-methionine = N(6),N(6),N(6)-trimethyl-L-lysyl-[protein] + 3 S-adenosyl-L-homocysteine + 3 H(+). Its function is as follows. Methylates ribosomal protein L11. The polypeptide is Ribosomal protein L11 methyltransferase (Helicobacter pylori (strain ATCC 700392 / 26695) (Campylobacter pylori)).